The primary structure comprises 292 residues: 4-hydroxy-tetrahydrodipicolinate synthase (292 aa).

A pyruvate-binding site is contributed by T45. The active-site Proton donor/acceptor is Y133. The active-site Schiff-base intermediate with substrate is the K161. Residue I203 participates in pyruvate binding.

Belongs to the DapA family. Homotetramer; dimer of dimers.

Its subcellular location is the cytoplasm. It carries out the reaction L-aspartate 4-semialdehyde + pyruvate = (2S,4S)-4-hydroxy-2,3,4,5-tetrahydrodipicolinate + H2O + H(+). It participates in amino-acid biosynthesis; L-lysine biosynthesis via DAP pathway; (S)-tetrahydrodipicolinate from L-aspartate: step 3/4. In terms of biological role, catalyzes the condensation of (S)-aspartate-beta-semialdehyde [(S)-ASA] and pyruvate to 4-hydroxy-tetrahydrodipicolinate (HTPA). The polypeptide is 4-hydroxy-tetrahydrodipicolinate synthase (Nitrosomonas europaea (strain ATCC 19718 / CIP 103999 / KCTC 2705 / NBRC 14298)).